A 302-amino-acid chain; its full sequence is Potassium/proton antiporter CemA (302 aa).

The next 4 membrane-spanning stretches (helical) occupy residues Val-55–Leu-75, Phe-187–Leu-207, Phe-225–Leu-247, and Phe-262–Ile-282.

This sequence belongs to the CemA family.

The protein localises to the plastid. It is found in the chloroplast inner membrane. It carries out the reaction K(+)(in) + H(+)(out) = K(+)(out) + H(+)(in). Functionally, contributes to K(+)/H(+) antiport activity by supporting proton efflux to control proton extrusion and homeostasis in chloroplasts in a light-dependent manner to modulate photosynthesis. Prevents excessive induction of non-photochemical quenching (NPQ) under continuous-light conditions. Indirectly promotes efficient inorganic carbon uptake into chloroplasts. The protein is Potassium/proton antiporter CemA of Tupiella akineta (Green alga).